A 352-amino-acid polypeptide reads, in one-letter code: Ribosomal lysine N-methyltransferase 5 (352 aa).

Residues tryptophan 107, glycine 161–glycine 163, aspartate 183, tryptophan 244, and leucine 274 contribute to the S-adenosyl-L-methionine site.

The protein belongs to the class I-like SAM-binding methyltransferase superfamily. RKM5 family.

S-adenosyl-L-methionine-dependent protein-lysine N-methyltransferase that methylates 60S ribosomal protein L1. The protein is Ribosomal lysine N-methyltransferase 5 (RKM5) of Candida glabrata (strain ATCC 2001 / BCRC 20586 / JCM 3761 / NBRC 0622 / NRRL Y-65 / CBS 138) (Yeast).